Here is a 769-residue protein sequence, read N- to C-terminus: 5-methyltetrahydropteroyltriglutamate--homocysteine methyltransferase (769 aa).

Residues 18-21 (RELK) and lysine 127 each bind 5-methyltetrahydropteroyltri-L-glutamate. L-homocysteine-binding positions include 447-449 (IGS) and glutamate 500. L-methionine is bound by residues 447 to 449 (IGS) and glutamate 500. Residues 531-532 (RC) and tryptophan 577 contribute to the 5-methyltetrahydropteroyltri-L-glutamate site. Aspartate 615 is an L-homocysteine binding site. Aspartate 615 lines the L-methionine pocket. A 5-methyltetrahydropteroyltri-L-glutamate-binding site is contributed by glutamate 621. Zn(2+)-binding residues include histidine 657, cysteine 659, and glutamate 681. Histidine 710 acts as the Proton donor in catalysis. Cysteine 742 contributes to the Zn(2+) binding site.

Belongs to the vitamin-B12 independent methionine synthase family. Zn(2+) is required as a cofactor.

The catalysed reaction is 5-methyltetrahydropteroyltri-L-glutamate + L-homocysteine = tetrahydropteroyltri-L-glutamate + L-methionine. The protein operates within amino-acid biosynthesis; L-methionine biosynthesis via de novo pathway; L-methionine from L-homocysteine (MetE route): step 1/1. In terms of biological role, catalyzes the transfer of a methyl group from 5-methyltetrahydrofolate to homocysteine resulting in methionine formation. In Chelativorans sp. (strain BNC1), this protein is 5-methyltetrahydropteroyltriglutamate--homocysteine methyltransferase.